A 123-amino-acid polypeptide reads, in one-letter code: Large ribosomal subunit protein uL14 (123 aa).

The protein belongs to the universal ribosomal protein uL14 family. As to quaternary structure, part of the 50S ribosomal subunit. Forms a cluster with proteins L3 and L19. In the 70S ribosome, L14 and L19 interact and together make contacts with the 16S rRNA in bridges B5 and B8.

Functionally, binds to 23S rRNA. Forms part of two intersubunit bridges in the 70S ribosome. The chain is Large ribosomal subunit protein uL14 from Wigglesworthia glossinidia brevipalpis.